A 304-amino-acid chain; its full sequence is Protein transport protein sec13 (304 aa).

6 WD repeats span residues 12–51, 56–97, 102–143, 147–203, 211–253, and 259–298; these read GHDDMIHDAVLDYYGRRLATCSSDRTIKIFEIEGESQRLV, GHDG…WQRI, LHKA…WEHN, AHGL…NGYK, GHTD…PGEW, and NFDAAVWRVSWSLSGNVLAASSDNNKVTLWKENLKGEWEN.

It belongs to the WD repeat SEC13 family. As to quaternary structure, the COPII coat is composed of at least 5 proteins: the sec23/24 complex, the sec13/31 complex, and the protein vtr-7/sar1. Component of the nuclear pore complex (NPC). NPC constitutes the exclusive means of nucleocytoplasmic transport. NPCs allow the passive diffusion of ions and small molecules and the active, nuclear transport receptor-mediated bidirectional transport of macromolecules such as proteins, RNAs, ribonucleoparticles (RNPs), and ribosomal subunits across the nuclear envelope. Due to its 8-fold rotational symmetry, all subunits are present with 8 copies or multiples thereof.

It localises to the cytoplasmic vesicle. Its subcellular location is the COPII-coated vesicle membrane. The protein localises to the endoplasmic reticulum membrane. It is found in the nucleus. The protein resides in the nuclear pore complex. Component of the coat protein complex II (COPII) which promotes the formation of transport vesicles from the endoplasmic reticulum (ER). The coat has two main functions, the physical deformation of the endoplasmic reticulum membrane into vesicles and the selection of cargo molecules. It also functions as a component of the nuclear pore complex (NPC). NPC components, collectively referred to as nucleoporins (NUPs), can play the role of both NPC structural components and of docking or interaction partners for transiently associated nuclear transport factors. Nup-20/sec13 is required for efficient mRNA export from the nucleus to the cytoplasm and for correct nuclear pore biogenesis and distribution. The protein is Protein transport protein sec13 (nup-20) of Neurospora crassa (strain ATCC 24698 / 74-OR23-1A / CBS 708.71 / DSM 1257 / FGSC 987).